The following is a 635-amino-acid chain: Threonine--tRNA ligase (635 aa).

Positions 1–61 (MIQITLPDNS…DHDARLQIIT (61 aa)) constitute a TGS domain. The segment at 242-533 (DHRKLGKELD…LIEHHAGALP (292 aa)) is catalytic. Zn(2+) contacts are provided by Cys-333, His-384, and His-510.

Belongs to the class-II aminoacyl-tRNA synthetase family. In terms of assembly, homodimer. Requires Zn(2+) as cofactor.

It is found in the cytoplasm. It catalyses the reaction tRNA(Thr) + L-threonine + ATP = L-threonyl-tRNA(Thr) + AMP + diphosphate + H(+). Catalyzes the attachment of threonine to tRNA(Thr) in a two-step reaction: L-threonine is first activated by ATP to form Thr-AMP and then transferred to the acceptor end of tRNA(Thr). Also edits incorrectly charged L-seryl-tRNA(Thr). In Variovorax paradoxus (strain S110), this protein is Threonine--tRNA ligase.